A 529-amino-acid chain; its full sequence is Bifunctional purine biosynthesis protein PurH (529 aa).

Residues 1–148 (MQQRRPIRRA…KNHKDVAIVV (148 aa)) form the MGS-like domain.

The protein belongs to the PurH family.

The enzyme catalyses (6R)-10-formyltetrahydrofolate + 5-amino-1-(5-phospho-beta-D-ribosyl)imidazole-4-carboxamide = 5-formamido-1-(5-phospho-D-ribosyl)imidazole-4-carboxamide + (6S)-5,6,7,8-tetrahydrofolate. The catalysed reaction is IMP + H2O = 5-formamido-1-(5-phospho-D-ribosyl)imidazole-4-carboxamide. The protein operates within purine metabolism; IMP biosynthesis via de novo pathway; 5-formamido-1-(5-phospho-D-ribosyl)imidazole-4-carboxamide from 5-amino-1-(5-phospho-D-ribosyl)imidazole-4-carboxamide (10-formyl THF route): step 1/1. It functions in the pathway purine metabolism; IMP biosynthesis via de novo pathway; IMP from 5-formamido-1-(5-phospho-D-ribosyl)imidazole-4-carboxamide: step 1/1. This chain is Bifunctional purine biosynthesis protein PurH, found in Yersinia enterocolitica serotype O:8 / biotype 1B (strain NCTC 13174 / 8081).